Reading from the N-terminus, the 160-residue chain is Sec-independent protein translocase protein TatB (160 aa).

A helical membrane pass occupies residues 1-21 (MIDLGVSKIALIGAVALIVIG). Disordered stretches follow at residues 70-100 (ARDVETSIQTSASDFEKSWSDATGSDASTAT) and 133-160 (RSGVRTKAQSGAARVARFRPQSGRSSSF). Residues 89–100 (SDATGSDASTAT) are compositionally biased toward polar residues.

This sequence belongs to the TatB family. The Tat system comprises two distinct complexes: a TatABC complex, containing multiple copies of TatA, TatB and TatC subunits, and a separate TatA complex, containing only TatA subunits. Substrates initially bind to the TatABC complex, which probably triggers association of the separate TatA complex to form the active translocon.

It localises to the cell inner membrane. Functionally, part of the twin-arginine translocation (Tat) system that transports large folded proteins containing a characteristic twin-arginine motif in their signal peptide across membranes. Together with TatC, TatB is part of a receptor directly interacting with Tat signal peptides. TatB may form an oligomeric binding site that transiently accommodates folded Tat precursor proteins before their translocation. In Polaromonas sp. (strain JS666 / ATCC BAA-500), this protein is Sec-independent protein translocase protein TatB.